Reading from the N-terminus, the 687-residue chain is Homeobox-leucine zipper protein HDG12 (687 aa).

A disordered region spans residues 1 to 32 (MEFLGDSQNHDSSETEKKNKKKKRFHRHTPHQ). Basic and acidic residues predominate over residues 8-17 (QNHDSSETEK). Residues 18–30 (KNKKKKRFHRHTP) show a composition bias toward basic residues. Positions 21 to 80 (KKKRFHRHTPHQIQRLESTFNECQHPDEKQRNQLSRELGLAPRQIKFWFQNRRTQKKAQH) form a DNA-binding region, homeobox. The stretch at 87–150 (ALKEENDKIR…LERVSSIAAK (64 aa)) forms a coiled coil. The START domain occupies 206 to 440 (SEMDKSLMTN…LQRMCERFTN (235 aa)).

The protein belongs to the HD-ZIP homeobox family. Class IV subfamily. Interacts with BBM. In terms of tissue distribution, expressed in apical meristems and young epidermal tissue including trichomes and stipules. Expressed in lateral root tips, the L1 layer of apical inflorescence meristems and early flower primordia, carpel and stamen filament epidermis, stigma papillae, ovule primordia, nucellus and embryo.

It localises to the nucleus. Probable transcription factor that acts as a negative regulator of trichome branching in association with HDG11. Seems to promote cell differentiation. May regulate cell differentiation and proliferation during root and shoot meristem development. Acts as a positive regulator of SCL18/LAS expression. Involved, together with PDF2, in the regulation of flower organs development by promoting the expression of APETALA 3 (AP3) in the epidermis and internal cell layers of developing flowers. The polypeptide is Homeobox-leucine zipper protein HDG12 (Arabidopsis thaliana (Mouse-ear cress)).